We begin with the raw amino-acid sequence, 447 residues long: NADH-quinone oxidoreductase subunit F (447 aa).

Residue 61–70 (GRGGAGFSTG) coordinates NAD(+). Residue 174-221 (GAGRYICGEETALINSLEGRRANPRAKPPFPAVFGLWGKPTCVNNVET) participates in FMN binding. The [4Fe-4S] cluster site is built by cysteine 352, cysteine 355, cysteine 358, and cysteine 399.

Belongs to the complex I 51 kDa subunit family. In terms of assembly, composed of 13 different subunits. Subunits NuoCD, E, F, and G constitute the peripheral sector of the complex. [4Fe-4S] cluster is required as a cofactor. Requires FMN as cofactor.

The enzyme catalyses a quinone + NADH + 5 H(+)(in) = a quinol + NAD(+) + 4 H(+)(out). NDH-1 shuttles electrons from NADH, via FMN and iron-sulfur (Fe-S) centers, to quinones in the respiratory chain. Couples the redox reaction to proton translocation (for every two electrons transferred, four hydrogen ions are translocated across the cytoplasmic membrane), and thus conserves the redox energy in a proton gradient. This is NADH-quinone oxidoreductase subunit F (nuoF) from Buchnera aphidicola subsp. Schizaphis graminum (strain Sg).